The following is a 197-amino-acid chain: MEHYLSLFIKSVFIENMALSFFLGMCTFLAVSKKVSTAFGLGVAVIFVLGLSVPVNQLVYSLLKDGAIAEGVDLTFLKFITFIGVIAALVQILEMFLDKFVPALYNALGIYLPLITVNCAIFGAVSFMAQREYNFGESVVYGFGAGLGWMLAIVALAGITEKMKYSDAPKGLKGLGITFIAAGLMAMAFMSFSGIQL.

6 consecutive transmembrane segments (helical) span residues 11–31, 35–55, 76–96, 108–128, 139–159, and 175–195; these read SVFI…FLAV, VSTA…SVPV, FLKF…LEMF, LGIY…VSFM, VVYG…LAGI, and LGIT…FSGI.

This sequence belongs to the NqrDE/RnfAE family. As to quaternary structure, composed of six subunits; NqrA, NqrB, NqrC, NqrD, NqrE and NqrF.

The protein localises to the cell inner membrane. The catalysed reaction is a ubiquinone + n Na(+)(in) + NADH + H(+) = a ubiquinol + n Na(+)(out) + NAD(+). Its function is as follows. NQR complex catalyzes the reduction of ubiquinone-1 to ubiquinol by two successive reactions, coupled with the transport of Na(+) ions from the cytoplasm to the periplasm. NqrA to NqrE are probably involved in the second step, the conversion of ubisemiquinone to ubiquinol. The sequence is that of Na(+)-translocating NADH-quinone reductase subunit E from Neisseria meningitidis serogroup B (strain ATCC BAA-335 / MC58).